The primary structure comprises 104 residues: L-rhamnose mutarotase (104 aa).

Residue Y18 participates in substrate binding. The active-site Proton donor is H22. Substrate-binding positions include Y41 and 76–77 (WW).

The protein belongs to the rhamnose mutarotase family. As to quaternary structure, homodimer.

Its subcellular location is the cytoplasm. The enzyme catalyses alpha-L-rhamnose = beta-L-rhamnose. It functions in the pathway carbohydrate metabolism; L-rhamnose metabolism. Functionally, involved in the anomeric conversion of L-rhamnose. The sequence is that of L-rhamnose mutarotase from Tolumonas auensis (strain DSM 9187 / NBRC 110442 / TA 4).